The chain runs to 79 residues: D-alanyl carrier protein (79 aa).

The Carrier domain occupies 1–76 (MEEQVLSLLE…RVMAYVKKRV (76 aa)). An O-(pantetheine 4'-phosphoryl)serine modification is found at serine 34.

This sequence belongs to the DltC family. In terms of processing, 4'-phosphopantetheine is transferred from CoA to a specific serine of apo-DCP.

The protein localises to the cytoplasm. The protein operates within cell wall biogenesis; lipoteichoic acid biosynthesis. Carrier protein involved in the D-alanylation of lipoteichoic acid (LTA). The loading of thioester-linked D-alanine onto DltC is catalyzed by D-alanine--D-alanyl carrier protein ligase DltA. The DltC-carried D-alanyl group is further transferred to cell membrane phosphatidylglycerol (PG) by forming an ester bond, probably catalyzed by DltD. D-alanylation of LTA plays an important role in modulating the properties of the cell wall in Gram-positive bacteria, influencing the net charge of the cell wall. This Abiotrophia defectiva (Streptococcus defectivus) protein is D-alanyl carrier protein.